The following is a 363-amino-acid chain: Phosphoserine aminotransferase (363 aa).

R42 lines the L-glutamate pocket. Pyridoxal 5'-phosphate contacts are provided by residues 76-77, W102, T156, D175, and Q198; that span reads GR. K199 carries the N6-(pyridoxal phosphate)lysine modification. Residue 240–241 participates in pyridoxal 5'-phosphate binding; it reads NT.

Belongs to the class-V pyridoxal-phosphate-dependent aminotransferase family. SerC subfamily. In terms of assembly, homodimer. Pyridoxal 5'-phosphate serves as cofactor.

It localises to the cytoplasm. It catalyses the reaction O-phospho-L-serine + 2-oxoglutarate = 3-phosphooxypyruvate + L-glutamate. The catalysed reaction is 4-(phosphooxy)-L-threonine + 2-oxoglutarate = (R)-3-hydroxy-2-oxo-4-phosphooxybutanoate + L-glutamate. Its pathway is amino-acid biosynthesis; L-serine biosynthesis; L-serine from 3-phospho-D-glycerate: step 2/3. It participates in cofactor biosynthesis; pyridoxine 5'-phosphate biosynthesis; pyridoxine 5'-phosphate from D-erythrose 4-phosphate: step 3/5. Catalyzes the reversible conversion of 3-phosphohydroxypyruvate to phosphoserine and of 3-hydroxy-2-oxo-4-phosphonooxybutanoate to phosphohydroxythreonine. This is Phosphoserine aminotransferase from Shewanella frigidimarina (strain NCIMB 400).